Here is a 45-residue protein sequence, read N- to C-terminus: Photosystem II reaction center protein K (45 aa).

The propeptide occupies 1 to 8 (MELAMLLA). Residues 24–44 (LPVIPVFFLLLAFVWQAAVGF) traverse the membrane as a helical segment.

This sequence belongs to the PsbK family. In terms of assembly, PSII is composed of 1 copy each of membrane proteins PsbA, PsbB, PsbC, PsbD, PsbE, PsbF, PsbH, PsbI, PsbJ, PsbK, PsbL, PsbM, PsbT, PsbX, PsbY, PsbZ, Psb30/Ycf12, peripheral proteins PsbO, CyanoQ (PsbQ), PsbU, PsbV and a large number of cofactors. It forms dimeric complexes.

It localises to the cellular thylakoid membrane. In terms of biological role, one of the components of the core complex of photosystem II (PSII). PSII is a light-driven water:plastoquinone oxidoreductase that uses light energy to abstract electrons from H(2)O, generating O(2) and a proton gradient subsequently used for ATP formation. It consists of a core antenna complex that captures photons, and an electron transfer chain that converts photonic excitation into a charge separation. This is Photosystem II reaction center protein K from Trichodesmium erythraeum (strain IMS101).